A 634-amino-acid chain; its full sequence is AAl-toxin cluster-specific transcription factor ALT13 (634 aa).

The segment at residues 30 to 56 (CENCKRRKVRCSGANPCEQCLKVNVHC) is a DNA-binding region (zn(2)-C6 fungal-type). The disordered stretch occupies residues 66 to 89 (RRSVPNSGADKNNQQGDTDRHNGA). Residues 69–81 (VPNSGADKNNQQG) show a composition bias toward polar residues.

It is found in the nucleus. In terms of biological role, transcription factor that regulates the expression of the gene cluster that mediates the biosynthesis of AAL-toxins, sphinganine-analog mycotoxins responsible for Alternaria stem canker on tomato by the tomato pathotype. This is AAl-toxin cluster-specific transcription factor ALT13 from Alternaria alternata (Alternaria rot fungus).